Reading from the N-terminus, the 588-residue chain is Pectinesterase 4 (588 aa).

Residues 1–24 (MIGKVVVSVASILLIVGVAIGVVA) form the signal peptide. N-linked (GlcNAc...) asparagine glycans are attached at residues Asn86, Asn206, and Asn342. Substrate-binding residues include Thr353 and Gln383. Residue Asp406 is the Proton donor of the active site. Catalysis depends on Asp427, which acts as the Nucleophile. The substrate site is built by Arg496 and Trp498.

In the N-terminal section; belongs to the PMEI family. It in the C-terminal section; belongs to the pectinesterase family. As to expression, expressed in pollen grains and pollen tubes.

The protein resides in the secreted. It localises to the cell wall. It carries out the reaction [(1-&gt;4)-alpha-D-galacturonosyl methyl ester](n) + n H2O = [(1-&gt;4)-alpha-D-galacturonosyl](n) + n methanol + n H(+). The protein operates within glycan metabolism; pectin degradation; 2-dehydro-3-deoxy-D-gluconate from pectin: step 1/5. Functionally, acts in the modification of cell walls via demethylesterification of cell wall pectin. Plays an important role in growth of pollen tubes in female floral tissues, possibly via enhancing the interaction between the pollen tube and female floral tissues by modification of the cell walls. This chain is Pectinesterase 4 (PME4), found in Arabidopsis thaliana (Mouse-ear cress).